A 191-amino-acid chain; its full sequence is MLLLLKQSELNDALKILKSQGVIAYPTESVFGLGCDPDCEAAIQKILLLKQRPAYKGLILIAASIEQLEKYADFSLLTAAQLTVIKKTWPGPITWIVPSQKNLSKLISGDFESVAVRVTAHPIVRQICLAFDKPIISTSANLSSLEAALSSQQVNKMFKSNTLLNLVIDAPVSGLSTPTQIFHASTGKRLR.

The region spanning 7–191 is the YrdC-like domain; sequence QSELNDALKI…FHASTGKRLR (185 aa).

Belongs to the SUA5 family. TsaC subfamily.

The protein resides in the cytoplasm. The catalysed reaction is L-threonine + hydrogencarbonate + ATP = L-threonylcarbamoyladenylate + diphosphate + H2O. Required for the formation of a threonylcarbamoyl group on adenosine at position 37 (t(6)A37) in tRNAs that read codons beginning with adenine. Catalyzes the conversion of L-threonine, HCO(3)(-)/CO(2) and ATP to give threonylcarbamoyl-AMP (TC-AMP) as the acyladenylate intermediate, with the release of diphosphate. This Psychromonas ingrahamii (strain DSM 17664 / CCUG 51855 / 37) protein is Threonylcarbamoyl-AMP synthase.